We begin with the raw amino-acid sequence, 541 residues long: MKALVENLKATARETDATDIRAAFAADPNRFSRFSTALDDLLFDYSKCAVNDRIIDGLEALAKAAKVEEKRDAMFRGDIINITEERAVLHTALRNRSNRPVLVDGKNVVPDVNAVLEAMGRFADHVRSGDLKGATGKKITDVVNIGIGGSDLGPVMATLALAPFHDGPRLHFVSNVDGAHIADTLKLLDAETSLFIVASKTFTTIETMTNAATARAFIAGKLGEAAVGHHFAAVSTALDKVGAFGINAARVFGFWDWVGGRYSIWSAIGLPLMIAIGKENFGRFLDGGHSMDEHFRAAPLRQNIPVLLGLIGFYNRNVLGYPSRAILPYDQRLTRFPAYLQQLDMESNGKGVTLESQPVEFSTGPVVWGEPGTNGQHAFYQLIHQGTDIIPAEFMIAAKGHEKDLRHQHQLLIANCLAQSEALMKGRTLAEAKAQLTSKGMDEAKADKIAPHRVFTGNRPSLTIVYDQLDPFALGRLIALYEHRVFVEGALFNINSFDQWGVELGKELATGLLPVVEGRESAEGHDSSTTGLVAALLKAAR.

Residue E346 is the Proton donor of the active site. Catalysis depends on residues H377 and K506.

This sequence belongs to the GPI family.

Its subcellular location is the cytoplasm. It catalyses the reaction alpha-D-glucose 6-phosphate = beta-D-fructose 6-phosphate. It functions in the pathway carbohydrate biosynthesis; gluconeogenesis. The protein operates within carbohydrate degradation; glycolysis; D-glyceraldehyde 3-phosphate and glycerone phosphate from D-glucose: step 2/4. Catalyzes the reversible isomerization of glucose-6-phosphate to fructose-6-phosphate. This chain is Glucose-6-phosphate isomerase, found in Sinorhizobium medicae (strain WSM419) (Ensifer medicae).